We begin with the raw amino-acid sequence, 440 residues long: MTKLLAYFPSPPQGVWHLGPVPIRAYALFIIAGIVAALLIGDRRWEARGGERGVIYDIALWTVPFGLVGGRLYHLATDWRTYWGPGGAGFGAAVRIWDGGLGIWGAVALGAVGAWIGCRRHGIPLPAFADALAPGIILAQAIGRLGNYFNQELYGRETTLPWGLEIFYRRDPSGYIDPHSLDGVSTGQVALVVQPTFLYELLWNLLIFVALLYADRRLTLGHGRLFALYVAGYCVGRFCVELLRDDTATHIAGIRINSFTSTFVFIGAVVYLMAAPKGREDPESLRGNQYVEEEPAEPEPATVAATTEAATEGVAAPADGAEAAGADATAQRPEESAEPDVEKPESEETEAEAAEEPESEETEAAEEPGEPEAEEPEEPEAEEPEEPETEEPEADSDEEPEEESGEAPEQPVAEEPEPAPQQPETKRRWGARLRDRLSGR.

The next 4 membrane-spanning stretches (helical) occupy residues Val21–Gly41, Gly53–Tyr73, Ile96–Ile116, and Gly122–Ile142. Arg144 lines the a 1,2-diacyl-sn-glycero-3-phospho-(1'-sn-glycerol) pocket. Transmembrane regions (helical) follow at residues Val189 to Val209 and Ile256 to Pro276. The interval Glu280–Arg440 is disordered. Low complexity predominate over residues Glu299–Ala330. Over residues Arg332 to Ser346 the composition is skewed to basic and acidic residues. Residues Glu347 to Glu417 show a composition bias toward acidic residues. Basic and acidic residues predominate over residues Glu424–Arg440.

The protein belongs to the Lgt family.

The protein resides in the cell membrane. The catalysed reaction is L-cysteinyl-[prolipoprotein] + a 1,2-diacyl-sn-glycero-3-phospho-(1'-sn-glycerol) = an S-1,2-diacyl-sn-glyceryl-L-cysteinyl-[prolipoprotein] + sn-glycerol 1-phosphate + H(+). Its pathway is protein modification; lipoprotein biosynthesis (diacylglyceryl transfer). Its function is as follows. Catalyzes the transfer of the diacylglyceryl group from phosphatidylglycerol to the sulfhydryl group of the N-terminal cysteine of a prolipoprotein, the first step in the formation of mature lipoproteins. The protein is Phosphatidylglycerol--prolipoprotein diacylglyceryl transferase of Mycobacterium avium (strain 104).